The following is a 670-amino-acid chain: DNA ligase (670 aa).

NAD(+)-binding positions include 35–39 (DSVYD), 84–85 (SL), and Glu-116. The N6-AMP-lysine intermediate role is filled by Lys-118. Residues Arg-139, Glu-176, Lys-293, and Lys-317 each coordinate NAD(+). Residues Cys-411, Cys-414, Cys-429, and Cys-435 each contribute to the Zn(2+) site. The BRCT domain occupies 592–670 (VVKSEIAGKT…EEAFLKLLKS (79 aa)).

Belongs to the NAD-dependent DNA ligase family. LigA subfamily. Mg(2+) serves as cofactor. Requires Mn(2+) as cofactor.

It carries out the reaction NAD(+) + (deoxyribonucleotide)n-3'-hydroxyl + 5'-phospho-(deoxyribonucleotide)m = (deoxyribonucleotide)n+m + AMP + beta-nicotinamide D-nucleotide.. Functionally, DNA ligase that catalyzes the formation of phosphodiester linkages between 5'-phosphoryl and 3'-hydroxyl groups in double-stranded DNA using NAD as a coenzyme and as the energy source for the reaction. It is essential for DNA replication and repair of damaged DNA. This chain is DNA ligase, found in Coxiella burnetii (strain RSA 331 / Henzerling II).